A 278-amino-acid chain; its full sequence is Translation initiation factor IF-3, mitochondrial (278 aa).

Residues 1–31 constitute a mitochondrion transit peptide; it reads MAALFLKRLTLQTVKSENSCIRCFGKHILQK. A disordered region spans residues 249-278; that stretch reads KAYKETQETQERDTLNKDHGNDKESNVLHQ.

This sequence belongs to the IF-3 family.

It localises to the mitochondrion. In terms of biological role, IF-3 binds to the 28S ribosomal subunit and shifts the equilibrium between 55S ribosomes and their 39S and 28S subunits in favor of the free subunits, thus enhancing the availability of 28S subunits on which protein synthesis initiation begins. This is Translation initiation factor IF-3, mitochondrial (MTIF3) from Homo sapiens (Human).